The following is a 395-amino-acid chain: 8-amino-7-oxononanoate synthase (395 aa).

R24 is a substrate binding site. 111-112 (GF) contributes to the pyridoxal 5'-phosphate binding site. H136 is a substrate binding site. Pyridoxal 5'-phosphate-binding positions include S184, 209–212 (DDAH), and 240–243 (TLSK). At K243 the chain carries N6-(pyridoxal phosphate)lysine. T357 is a binding site for substrate.

This sequence belongs to the class-II pyridoxal-phosphate-dependent aminotransferase family. BioF subfamily. Homodimer. The cofactor is pyridoxal 5'-phosphate.

It catalyses the reaction 6-carboxyhexanoyl-[ACP] + L-alanine + H(+) = (8S)-8-amino-7-oxononanoate + holo-[ACP] + CO2. It functions in the pathway cofactor biosynthesis; biotin biosynthesis. Functionally, catalyzes the decarboxylative condensation of pimeloyl-[acyl-carrier protein] and L-alanine to produce 8-amino-7-oxononanoate (AON), [acyl-carrier protein], and carbon dioxide. The polypeptide is 8-amino-7-oxononanoate synthase (Thermoanaerobacter pseudethanolicus (strain ATCC 33223 / 39E) (Clostridium thermohydrosulfuricum)).